Reading from the N-terminus, the 55-residue chain is Caltrin-like protein 2 (55 aa).

Positions 7–55 (AINRPGSCPRVMIYCPARHPPNKCTSDYDCPKPQKCCPGYCGKQCYQPE) constitute a WAP domain.

Glycosylated.

Inhibits calcium transport into spermatozoa. This chain is Caltrin-like protein 2, found in Cavia porcellus (Guinea pig).